The chain runs to 330 residues: D-lactate dehydrogenase (330 aa).

Residues 156-157 (RI), D176, 206-207 (VP), 233-235 (AAR), and D259 contribute to the NAD(+) site. R235 is an active-site residue. Residue E264 is part of the active site. The active-site Proton donor is the H296.

This sequence belongs to the D-isomer specific 2-hydroxyacid dehydrogenase family.

It catalyses the reaction (R)-lactate + NAD(+) = pyruvate + NADH + H(+). The sequence is that of D-lactate dehydrogenase (ldhD) from Staphylococcus aureus (strain MRSA252).